Here is a 375-residue protein sequence, read N- to C-terminus: CLIP domain-containing serine protease B14 (375 aa).

The first 24 residues, 1–24 (MYSRRYVACGLLCLLVIAIDQGHG), serve as a signal peptide directing secretion. Residues 29 to 83 (PCTTPNGTAGRCVRVRECGYVLDLLRKDLFAHSDTVHLEGLQCGTRPDGGALVCC) form the Clip domain. 3 disulfides stabilise this stretch: C30–C82, C40–C71, and C46–C83. N-linked (GlcNAc...) asparagine glycosylation occurs at N34. One can recognise a Peptidase S1 domain in the interval 101 to 370 (IIGGNDTELG…YMGWLEREMF (270 aa)). N105 carries an N-linked (GlcNAc...) asparagine glycan. C131 and C147 are joined by a disulfide. Catalysis depends on charge relay system residues H146 and D213. An N-linked (GlcNAc...) asparagine glycan is attached at N238. 2 cysteine pairs are disulfide-bonded: C289–C307 and C317–C346. Residue S321 is the Charge relay system of the active site. Residue N357 is glycosylated (N-linked (GlcNAc...) asparagine).

This sequence belongs to the peptidase S1 family. CLIP subfamily. N-glycosylated. In terms of processing, proteolytically cleaved. As to expression, expressed by a subpopulation of hemocytes.

The protein resides in the secreted. Functionally, serine protease. Plays a role in innate immunity against infections by parasite P.berghei and by Gram-negative bacteria such as E.coli. In response to P.berghei infection, contributes to the clearing of parasite ookinetes independent of melanization, an innate immune response which consists in the deposition of melanin pigments on invading pathogens and parasites. May play a role in non-septic wound healing. The sequence is that of CLIP domain-containing serine protease B14 from Anopheles gambiae (African malaria mosquito).